The primary structure comprises 920 residues: Protein translocase subunit SecA 2 (920 aa).

ATP-binding positions include Q91, 109–113 (GEGKT), and D527. The segment covering 859-870 (GEGSALDRRPTD) has biased composition (basic and acidic residues). A disordered region spans residues 859–920 (GEGSALDRRP…KSRNRRRRKR (62 aa)). The span at 906–920 (PHRPGKSRNRRRRKR) shows a compositional bias: basic residues.

The protein belongs to the SecA family. As to quaternary structure, monomer and homodimer. Part of the essential Sec protein translocation apparatus which comprises SecA, SecYEG and auxiliary proteins SecDF. Other proteins may also be involved.

Its subcellular location is the cell membrane. It localises to the cytoplasm. The catalysed reaction is ATP + H2O + cellular proteinSide 1 = ADP + phosphate + cellular proteinSide 2.. Its function is as follows. Part of the Sec protein translocase complex. Interacts with the SecYEG preprotein conducting channel. Has a central role in coupling the hydrolysis of ATP to the transfer of proteins into and across the cell membrane, serving as an ATP-driven molecular motor driving the stepwise translocation of polypeptide chains across the membrane. The protein is Protein translocase subunit SecA 2 of Streptomyces avermitilis (strain ATCC 31267 / DSM 46492 / JCM 5070 / NBRC 14893 / NCIMB 12804 / NRRL 8165 / MA-4680).